Consider the following 1612-residue polypeptide: Chromatin-remodeling ATPase INO80 (1612 aa).

Disordered regions lie at residues Met-1–Ile-288, Gln-387–Glu-409, Arg-438–Pro-554, and Gln-607–Ala-626. Residues Gln-10–Asn-25 show a composition bias toward polar residues. Residues Pro-113–Ser-126 show a composition bias toward low complexity. Basic and acidic residues-rich tracts occupy residues Ser-132–Ser-148 and Arg-246–Ser-267. Residues Ser-379–Glu-455 are a coiled coil. Composition is skewed to basic and acidic residues over residues Ser-501–Ala-512, Pro-529–Glu-549, and Lys-610–Ala-624. The 126-residue stretch at Ile-570–Gly-695 folds into the DBINO domain. A coiled-coil region spans residues Gln-612–Leu-684. Residues Val-810–Thr-982 form the Helicase ATP-binding domain. Asp-823 to Thr-830 serves as a coordination point for ATP. The DEAQ box signature appears at Asp-933–Gln-936. In terms of domain architecture, Helicase C-terminal spans Lys-1325–Asp-1485. The segment at Glu-1513–Gly-1612 is disordered. Over residues Gly-1523 to Arg-1533 the composition is skewed to basic residues. Residues Asp-1534–Glu-1545 show a composition bias toward basic and acidic residues. Over residues Pro-1561 to Thr-1575 the composition is skewed to polar residues. The span at Lys-1579–Lys-1594 shows a compositional bias: basic residues. Positions Thr-1595–Asp-1604 are enriched in basic and acidic residues.

The protein belongs to the SNF2/RAD54 helicase family. In terms of assembly, component of the INO80 chromatin-remodeling complex.

The protein localises to the nucleus. The catalysed reaction is ATP + H2O = ADP + phosphate + H(+). Its function is as follows. ATPase component of the INO80 complex which remodels chromatin by shifting nucleosomes and is involved in DNA repair. The chain is Chromatin-remodeling ATPase INO80 (ino80) from Emericella nidulans (strain FGSC A4 / ATCC 38163 / CBS 112.46 / NRRL 194 / M139) (Aspergillus nidulans).